A 331-amino-acid chain; its full sequence is 6-phosphogluconolactonase (331 aa).

It belongs to the cycloisomerase 2 family.

The enzyme catalyses 6-phospho-D-glucono-1,5-lactone + H2O = 6-phospho-D-gluconate + H(+). Its pathway is carbohydrate degradation; pentose phosphate pathway; D-ribulose 5-phosphate from D-glucose 6-phosphate (oxidative stage): step 2/3. Its function is as follows. Catalyzes the hydrolysis of 6-phosphogluconolactone to 6-phosphogluconate. The chain is 6-phosphogluconolactonase from Enterobacter sp. (strain 638).